Reading from the N-terminus, the 40-residue chain is Putative protein FAM86JP (40 aa).

The tract at residues 1–40 (MPGAFSQNSSKRRAVLPRSHRVAGRGPAEAGCLPGAPAGS) is disordered. Over residues 10-23 (SKRRAVLPRSHRVA) the composition is skewed to basic residues.

The polypeptide is Putative protein FAM86JP (Homo sapiens (Human)).